The primary structure comprises 508 residues: Bifunctional purine biosynthesis protein PurH (508 aa).

In terms of domain architecture, MGS-like spans 1–145 (MIKRALLSTY…KNYKDVIVVV (145 aa)).

The protein belongs to the PurH family.

It carries out the reaction (6R)-10-formyltetrahydrofolate + 5-amino-1-(5-phospho-beta-D-ribosyl)imidazole-4-carboxamide = 5-formamido-1-(5-phospho-D-ribosyl)imidazole-4-carboxamide + (6S)-5,6,7,8-tetrahydrofolate. The enzyme catalyses IMP + H2O = 5-formamido-1-(5-phospho-D-ribosyl)imidazole-4-carboxamide. It functions in the pathway purine metabolism; IMP biosynthesis via de novo pathway; 5-formamido-1-(5-phospho-D-ribosyl)imidazole-4-carboxamide from 5-amino-1-(5-phospho-D-ribosyl)imidazole-4-carboxamide (10-formyl THF route): step 1/1. It participates in purine metabolism; IMP biosynthesis via de novo pathway; IMP from 5-formamido-1-(5-phospho-D-ribosyl)imidazole-4-carboxamide: step 1/1. In Petrotoga mobilis (strain DSM 10674 / SJ95), this protein is Bifunctional purine biosynthesis protein PurH.